The chain runs to 116 residues: Flagellar transcriptional regulator FlhD (116 aa).

This sequence belongs to the FlhD family. As to quaternary structure, homodimer; disulfide-linked. Forms a heterohexamer composed of two FlhC and four FlhD subunits. Each FlhC binds a FlhD dimer, forming a heterotrimer, and a hexamer assembles by dimerization of two heterotrimers.

It localises to the cytoplasm. In terms of biological role, functions in complex with FlhC as a master transcriptional regulator that regulates transcription of several flagellar and non-flagellar operons by binding to their promoter region. Activates expression of class 2 flagellar genes, including fliA, which is a flagellum-specific sigma factor that turns on the class 3 genes. Also regulates genes whose products function in a variety of physiological pathways. This chain is Flagellar transcriptional regulator FlhD, found in Proteus mirabilis (strain HI4320).